Reading from the N-terminus, the 579-residue chain is Fatty-acid amide hydrolase 1 (579 aa).

Residues 9-29 (ALSGLSGVCLACSLLSAAVVL) form a helical membrane-spanning segment. At 30-403 (RWTRSQTARG…GDFVDPCLGD (374 aa)) the chain is on the cytoplasmic side. The Charge relay system role is filled by K142. Substrate-binding positions include M191, S217, and 238–241 (IGGS). Residue S217 is the Charge relay system of the active site. The active-site Acyl-ester intermediate is the S241. A Phosphoserine modification is found at S241. Residues 404-433 (LVLVLKLPRWFKKLLSFLLKPLFPRLAAFL) lie within the membrane without spanning it. The Cytoplasmic portion of the chain corresponds to 434 to 579 (NSMCPRSAEK…RLMTPEKRPS (146 aa)).

The protein belongs to the amidase family. As to quaternary structure, homodimer.

It is found in the endoplasmic reticulum membrane. The protein localises to the golgi apparatus membrane. It catalyses the reaction N-(5Z,8Z,11Z,14Z-eicosatetraenoyl)-ethanolamine + H2O = ethanolamine + (5Z,8Z,11Z,14Z)-eicosatetraenoate. The enzyme catalyses (9Z)-octadecenamide + H2O = (9Z)-octadecenoate + NH4(+). The catalysed reaction is 2-(5Z,8Z,11Z,14Z-eicosatetraenoyl)-glycerol + H2O = glycerol + (5Z,8Z,11Z,14Z)-eicosatetraenoate + H(+). It carries out the reaction N-(9Z-hexadecenoyl) ethanolamine + H2O = (9Z)-hexadecenoate + ethanolamine. It catalyses the reaction N-(9Z-octadecenoyl) ethanolamine + H2O = ethanolamine + (9Z)-octadecenoate. The enzyme catalyses N-octadecanoyl ethanolamine + H2O = octadecanoate + ethanolamine. The catalysed reaction is N-docosanoyl-ethanolamine + H2O = docosanoate + ethanolamine. It carries out the reaction N-tetracosanoyl-taurine + H2O = tetracosanoate + taurine. It catalyses the reaction N-(15Z-tetracosenoyl)-ethanolamine + H2O = (15Z)-tetracosenoate + ethanolamine. The enzyme catalyses N-(9Z-octadecenoyl)-taurine + H2O = taurine + (9Z)-octadecenoate. The catalysed reaction is N-docosanoyl-taurine + H2O = docosanoate + taurine. It carries out the reaction N-(15Z-tetracosenoyl)-taurine + H2O = (15Z)-tetracosenoate + taurine. It catalyses the reaction N-tricosanoyl-taurine + H2O = tricosanoate + taurine. The enzyme catalyses (9Z,12Z,15Z)-octadecatrienamide + H2O = (9Z,12Z,15Z)-octadecatrienoate + NH4(+). The catalysed reaction is (5Z,8Z,11Z,14Z)-eicosatetraenamide + H2O = (5Z,8Z,11Z,14Z)-eicosatetraenoate + NH4(+). It carries out the reaction (6Z)-octadecenamide + H2O = (6Z)-octadecenoate + NH4(+). It catalyses the reaction (15Z)-tetracosenamide + H2O = (15Z)-tetracosenoate + NH4(+). The enzyme catalyses (8Z,11Z,14Z)-eicosatrienamide + H2O = (8Z,11Z,14Z)-eicosatrienoate + NH4(+). The catalysed reaction is (11Z,14Z,17Z)-eicosatrienamide + H2O = (11Z,14Z,17Z)-eicosatrienoate + NH4(+). It carries out the reaction (11Z,14Z)-eicosadienamide + H2O = (11Z,14Z)-eicosadienoate + NH4(+). It catalyses the reaction (9Z,12Z)-octadecadienamide + H2O = (9Z,12Z)-octadecadienoate + NH4(+). The enzyme catalyses tetradecamide + H2O = tetradecanoate + NH4(+). The catalysed reaction is 1-O-methyl-(5Z,8Z,11Z,14Z)-eicosatetraenoate + H2O = methanol + (5Z,8Z,11Z,14Z)-eicosatetraenoate + H(+). It carries out the reaction (11Z)-eicosenamide + H2O = (11Z)-eicosenoate + NH4(+). It catalyses the reaction (9Z)-octadecenoate + glycine = N-(9Z-octadecenoyl)glycine + H2O. The enzyme catalyses N-(5Z,8Z,11Z,14Z)-eicosatetraenoyl-glycine + H2O = (5Z,8Z,11Z,14Z)-eicosatetraenoate + glycine. The catalysed reaction is N-(5Z,8Z,11Z,14Z-eicosatetraenoyl)-L-serine + H2O = (5Z,8Z,11Z,14Z)-eicosatetraenoate + L-serine. Inhibited the trifluoromethyl compound PF-3845. In terms of biological role, catalyzes the hydrolysis of endogenous amidated lipids like the endocannabinoid anandamide (N-(5Z,8Z,11Z,14Z-eicosatetraenoyl)-ethanolamine), as well as other fatty amides such as the taurine-conjugated fatty acids (a structural class of central nervous system (CNS) metabolites), to their corresponding fatty acids, thereby regulating the signaling functions of these molecules. FAAH cooperates with PM20D1 in the hydrolysis of amino acid-conjugated fatty acids such as N-fatty acyl glycine and N-fatty acyl-L-serine, thereby acting as a physiological regulator of specific subsets of intracellular, but not of extracellular, N-fatty acyl amino acids. It can also catalyze the hydrolysis of the endocannabinoid 2-arachidonoylglycerol (2-(5Z,8Z,11Z,14Z-eicosatetraenoyl)-glycerol). The polypeptide is Fatty-acid amide hydrolase 1 (Faah) (Mus musculus (Mouse)).